A 589-amino-acid polypeptide reads, in one-letter code: Protein kinase G11A (589 aa).

The disordered stretch occupies residues 1 to 167; it reads MASKAMPRAP…SACSSISSVT (167 aa). Composition is skewed to polar residues over residues 15-36, 46-55, and 63-76; these read NLQS…SPSK, AESSKPNSEV, and TQHQ…TGSN. The segment covering 91-100 has biased composition (basic and acidic residues); it reads RLADEEKGVV. Residues 142–165 are compositionally biased toward low complexity; it reads SSSRCRPSTSSDVSDESACSSISS. A Protein kinase domain is found at 195-533; the sequence is FKLLKKLGCG…ATEIKQHPFF (339 aa). Residues 201-209 and Lys224 contribute to the ATP site; that span reads LGCGDIGSV. Asp320 acts as the Proton acceptor in catalysis. The disordered stretch occupies residues 551 to 589; it reads RPVEIERPPKQPVSTSEPAAAPSDAAQKSSDSYLEFDFF.

Belongs to the protein kinase superfamily. Ser/Thr protein kinase family.

It carries out the reaction L-seryl-[protein] + ATP = O-phospho-L-seryl-[protein] + ADP + H(+). The enzyme catalyses L-threonyl-[protein] + ATP = O-phospho-L-threonyl-[protein] + ADP + H(+). Its function is as follows. May play a role in the regulation of metabolism and signal transduction processes. The protein is Protein kinase G11A of Oryza sativa subsp. indica (Rice).